We begin with the raw amino-acid sequence, 384 residues long: PqqA peptide cyclase (384 aa).

Residues 15 to 231 (PGPPLWLLAE…NQWRDKLAAE (217 aa)) enclose the Radical SAM core domain. Residues Cys-29, Cys-33, and Cys-36 each coordinate [4Fe-4S] cluster.

It belongs to the radical SAM superfamily. PqqE family. Interacts with PqqD. The interaction is necessary for activity of PqqE. Requires [4Fe-4S] cluster as cofactor.

It catalyses the reaction [PQQ precursor protein] + S-adenosyl-L-methionine = E-Y cross-linked-[PQQ precursor protein] + 5'-deoxyadenosine + L-methionine + H(+). The protein operates within cofactor biosynthesis; pyrroloquinoline quinone biosynthesis. In terms of biological role, catalyzes the cross-linking of a glutamate residue and a tyrosine residue in the PqqA protein as part of the biosynthesis of pyrroloquinoline quinone (PQQ). In Ectopseudomonas mendocina (strain ymp) (Pseudomonas mendocina), this protein is PqqA peptide cyclase.